Here is a 178-residue protein sequence, read N- to C-terminus: Twist-related protein (178 aa).

Positions 20 to 71 (QQRACANRRERQRTKELNDAFTLLRKLIPSMPSDKMSKIHTLRIATDYISFL) constitute a bHLH domain.

In terms of assembly, efficient DNA binding requires dimerization with another bHLH protein. Homodimer. Forms a heterodimer with hlh-2. Expressed in defecation-associated muscles and neuron-like cells in the head at the L1 stage. In later larvae, expressed in SM cells and their descendants. Not expressed in differentiated body wall or sex muscles.

The protein resides in the nucleus. In terms of biological role, acts as a transcriptional regulator. Involved in postembryonic mesodermal cell fate specification. Activates ceh-24 and egl-15 during mesodermal patterning. The polypeptide is Twist-related protein (hlh-8) (Caenorhabditis elegans).